Here is a 410-residue protein sequence, read N- to C-terminus: Lissencephaly-1 homolog A (410 aa).

Positions 7–39 (QRDELNRAIADYLRSNGYEEAYSVFKKEAELDM) constitute a LisH domain. Positions 56–83 (TSVIRLQKKVMELESKLNEAKEEINIGG) form a coiled coil. 7 WD repeats span residues 106–145 (GHRS…FERT), 148–187 (GHTD…CIRT), 190–229 (GHDH…CVKT), 232–271 (GHRE…CKAE), 274–333 (EHEH…CLMT), 336–375 (GHDN…CTKT), and 378–410 (AHEH…WECR).

The protein belongs to the WD repeat LIS1/nudF family. In terms of assembly, can self-associate. Component of the cytosolic PAF-AH (I) heterotetrameric enzyme, which is composed of PAFAH1B1 (beta), PAFAH1B2 (alpha2) and PAFAH1B3 (alpha1) subunits. The catalytic activity of the enzyme resides in the alpha1 (PAFAH1B3) and alpha2 (PAFAH1B2) subunits, whereas the beta subunit (PAFAH1B1) has regulatory activity. Trimer formation is not essential for the catalytic activity. Interacts with dynein, dynactin, nde1 and ndel1.

The protein resides in the cytoplasm. The protein localises to the cytoskeleton. It localises to the microtubule organizing center. It is found in the centrosome. Regulatory subunit (beta subunit) of the cytosolic type I platelet-activating factor (PAF) acetylhydrolase (PAF-AH (I)), an enzyme that catalyzes the hydrolyze of the acetyl group at the sn-2 position of PAF and its analogs and participates in PAF inactivation. Regulates the PAF-AH (I) activity in a catalytic dimer composition-dependent manner. Positively regulates the activity of the minus-end directed microtubule motor protein dynein. May enhance dynein-mediated microtubule sliding by targeting dynein to the microtubule plus end. Required for several dynein- and microtubule-dependent processes such as the maintenance of Golgi integrity, the peripheral transport of microtubule fragments and the coupling of the nucleus and centrosome. May be required for proliferation of neuronal precursors and neuronal migration. In Danio rerio (Zebrafish), this protein is Lissencephaly-1 homolog A (pafah1b1a).